The chain runs to 218 residues: MMP 1-O-methyltransferase (218 aa).

Residues Phe20, Gly46, Ser52, Asp71, Gly75, and Ser124 each coordinate S-adenosyl-L-methionine. Asp141 serves as a coordination point for Mg(2+). His144 acts as the Proton acceptor in catalysis. Arg151 contributes to the S-adenosyl-L-methionine binding site. Positions 169 and 170 each coordinate Mg(2+).

Belongs to the methyltransferase superfamily. As to quaternary structure, homodimer. Mg(2+) is required as a cofactor.

The enzyme catalyses 3,3'-di-O-methyl-4alpha-mannobiose + S-adenosyl-L-methionine = 1,3,3'-tri-O-methyl-4alpha-mannobiose + S-adenosyl-L-homocysteine + H(+). Its activity is regulated as follows. Inhibited by EDTA. Involved in the biosynthesis of 3-O-methylmannose polysaccharides (MMP), which are intracellular polymethylated polysaccharides implicated in the modulation of fatty acid metabolism in non-tuberculous mycobacteria. Specifically methylates the 1-OH position of 3,3'-di-O-methyl-4alpha-mannobiose, a probable early precursor of MMP, yielding the reducing end dimannoside of MMP. The protein is MMP 1-O-methyltransferase of Mycolicibacterium hassiacum (strain DSM 44199 / CIP 105218 / JCM 12690 / 3849) (Mycobacterium hassiacum).